Here is a 209-residue protein sequence, read N- to C-terminus: Thiamine-phosphate synthase 1 (209 aa).

Residues 39-43 (QFREK) and asparagine 74 contribute to the 4-amino-2-methyl-5-(diphosphooxymethyl)pyrimidine site. Mg(2+) is bound by residues aspartate 75 and aspartate 94. Serine 112 contributes to the 4-amino-2-methyl-5-(diphosphooxymethyl)pyrimidine binding site. 138–140 (TQS) is a binding site for 2-[(2R,5Z)-2-carboxy-4-methylthiazol-5(2H)-ylidene]ethyl phosphate. Residue lysine 141 coordinates 4-amino-2-methyl-5-(diphosphooxymethyl)pyrimidine. Residues glycine 170 and 190–191 (IS) contribute to the 2-[(2R,5Z)-2-carboxy-4-methylthiazol-5(2H)-ylidene]ethyl phosphate site.

The protein belongs to the thiamine-phosphate synthase family. Requires Mg(2+) as cofactor.

It catalyses the reaction 2-[(2R,5Z)-2-carboxy-4-methylthiazol-5(2H)-ylidene]ethyl phosphate + 4-amino-2-methyl-5-(diphosphooxymethyl)pyrimidine + 2 H(+) = thiamine phosphate + CO2 + diphosphate. It carries out the reaction 2-(2-carboxy-4-methylthiazol-5-yl)ethyl phosphate + 4-amino-2-methyl-5-(diphosphooxymethyl)pyrimidine + 2 H(+) = thiamine phosphate + CO2 + diphosphate. The catalysed reaction is 4-methyl-5-(2-phosphooxyethyl)-thiazole + 4-amino-2-methyl-5-(diphosphooxymethyl)pyrimidine + H(+) = thiamine phosphate + diphosphate. Its pathway is cofactor biosynthesis; thiamine diphosphate biosynthesis; thiamine phosphate from 4-amino-2-methyl-5-diphosphomethylpyrimidine and 4-methyl-5-(2-phosphoethyl)-thiazole: step 1/1. Its function is as follows. Condenses 4-methyl-5-(beta-hydroxyethyl)thiazole monophosphate (THZ-P) and 2-methyl-4-amino-5-hydroxymethyl pyrimidine pyrophosphate (HMP-PP) to form thiamine monophosphate (TMP). The polypeptide is Thiamine-phosphate synthase 1 (Streptococcus pneumoniae (strain ATCC BAA-255 / R6)).